A 600-amino-acid polypeptide reads, in one-letter code: ATP-dependent lipid A-core flippase (600 aa).

Transmembrane regions (helical) follow at residues 26–46 (VGIF…QPML), 82–102 (LLIV…NYFL), 167–187 (VFLF…MLAI), and 266–286 (PMLQ…VLFL). Residues 30-321 (LLSILGFVIF…LSEVSSTIQK (292 aa)) enclose the ABC transmembrane type-1 domain. In terms of domain architecture, ABC transporter spans 353–589 (LEVKNLSFFY…NGYYARLHAM (237 aa)). Residue 387 to 394 (GRSGSGKS) participates in ATP binding.

Belongs to the ABC transporter superfamily. Lipid exporter (TC 3.A.1.106) family. Homodimer.

It localises to the cell inner membrane. The enzyme catalyses ATP + H2O + lipid A-core oligosaccharideSide 1 = ADP + phosphate + lipid A-core oligosaccharideSide 2.. In terms of biological role, involved in lipopolysaccharide (LPS) biosynthesis. Translocates lipid A-core from the inner to the outer leaflet of the inner membrane. Transmembrane domains (TMD) form a pore in the inner membrane and the ATP-binding domain (NBD) is responsible for energy generation. This is ATP-dependent lipid A-core flippase from Pseudomonas syringae pv. tomato (strain ATCC BAA-871 / DC3000).